Reading from the N-terminus, the 404-residue chain is Cysteine desulfurase IscS (404 aa).

Pyridoxal 5'-phosphate is bound by residues 75–76 (AT), N155, Q183, and 203–205 (SGH). At K206 the chain carries N6-(pyridoxal phosphate)lysine. T243 lines the pyridoxal 5'-phosphate pocket. C328 functions as the Cysteine persulfide intermediate in the catalytic mechanism. A [2Fe-2S] cluster-binding site is contributed by C328.

Belongs to the class-V pyridoxal-phosphate-dependent aminotransferase family. NifS/IscS subfamily. As to quaternary structure, homodimer. Forms a heterotetramer with IscU, interacts with other sulfur acceptors. Pyridoxal 5'-phosphate serves as cofactor.

The protein resides in the cytoplasm. It catalyses the reaction (sulfur carrier)-H + L-cysteine = (sulfur carrier)-SH + L-alanine. The protein operates within cofactor biosynthesis; iron-sulfur cluster biosynthesis. Functionally, master enzyme that delivers sulfur to a number of partners involved in Fe-S cluster assembly, tRNA modification or cofactor biosynthesis. Catalyzes the removal of elemental sulfur atoms from cysteine to produce alanine. Functions as a sulfur delivery protein for Fe-S cluster synthesis onto IscU, an Fe-S scaffold assembly protein, as well as other S acceptor proteins. The protein is Cysteine desulfurase IscS of Shewanella oneidensis (strain ATCC 700550 / JCM 31522 / CIP 106686 / LMG 19005 / NCIMB 14063 / MR-1).